The chain runs to 658 residues: MFRVTGIATARAVALQPFRAPLGVIRRFGISATASYEFQHGHDMQSRNGSRWDSRRQGDRRSSRWEGRGSDREDGERGSRGGMWRKPQGRRGRTDGAAREGFSLGPNTEVVRVADEAAGVESTPRTLVEEGVLSNELYEMLQSRGFDKLTPVQQKTLKPILQTEHDVVARAKTGTGKTLAFLMPLFQRLLEGPPSENVKAVVIAPTRDLAAQIFNEINEMRNANRKLRRFNAVVMMGGSSRTETFRSLERRRPNIVVATPGRLIDMLEACGPKYFTEVDFKVLDEADTLLEIGFKQALEQINDILNQLNQKGTTHIRTLLVSATLDDKVQSLANSIMNHAKCLFIDTVDPNEQATNENIAQKVVISKDFADNITASLYKIREEASANPKLKAIVFMPTIVAVEYWGELLQSQCRGTPVLLFHGGLSQGRRNSTMKRFRAMDSGILVCTDVAARGMDVSDVQHVYQVGVPTSPDNYIHRIGRTGRAGRKGSSTIFLAEHELCILDILRRKNNVVISDQETFDAAAQELSDVREAFSLDRDRLHDFLLKNLSFYRGSQGEYDFPLEAYISIARAYGTLLGDSNQRLTLSGRMLTTFVPNHPAVCSLFNIIGPVNSKSSYGFRDTNKRHRRGRLDDSGRLEYSKKRHSYARSYSPSISDGF.

A mitochondrion-targeting transit peptide spans 1-35; it reads MFRVTGIATARAVALQPFRAPLGVIRRFGISATAS. Residues 40-79 are compositionally biased toward basic and acidic residues; that stretch reads HGHDMQSRNGSRWDSRRQGDRRSSRWEGRGSDREDGERGS. The disordered stretch occupies residues 40-104; the sequence is HGHDMQSRNG…DGAAREGFSL (65 aa). The Q motif signature appears at 126-154; the sequence is TLVEEGVLSNELYEMLQSRGFDKLTPVQQ. Residues 158–343 form the Helicase ATP-binding domain; sequence KPILQTEHDV…NSIMNHAKCL (186 aa). 171-178 is a binding site for ATP; that stretch reads AKTGTGKT. Residues 284–287 carry the DEAD box motif; sequence DEAD. In terms of domain architecture, Helicase C-terminal spans 372–528; it reads NITASLYKIR…TFDAAAQELS (157 aa).

Belongs to the DEAD box helicase family. DDX18/HAS1 subfamily.

Its subcellular location is the mitochondrion matrix. It catalyses the reaction ATP + H2O = ADP + phosphate + H(+). ATP-dependent RNA helicase required for mitochondrial splicing of group I and II introns. Also required for efficient mitochondrial translation. This Eremothecium gossypii (strain ATCC 10895 / CBS 109.51 / FGSC 9923 / NRRL Y-1056) (Yeast) protein is ATP-dependent RNA helicase MSS116, mitochondrial (MSS116).